The sequence spans 101 residues: Early E3A 11.6 kDa glycoprotein (101 aa).

A glycan (N-linked (GlcNAc...) asparagine; by host) is linked at N14. Residues 41-62 (MWWFSIALMFVCLIIMWLICCL) form a helical membrane-spanning segment.

The protein belongs to the adenoviridae E3A-1 family. In terms of processing, N-glycosylated and probably also O-glycosylated.

It localises to the host nucleus membrane. The chain is Early E3A 11.6 kDa glycoprotein from Human adenovirus C serotype 6 (HAdV-6).